The primary structure comprises 577 residues: Moesin (577 aa).

An FERM domain is found at proline 2–arginine 295. Position 74 is a phosphoserine (serine 74). Position 79 is an N6-acetyllysine (lysine 79). An N6-succinyllysine modification is found at lysine 83. Residues isoleucine 115–glutamate 120 carry the [IL]-x-C-x-x-[DE] motif motif. Tyrosine 116 is subject to Phosphotyrosine. An S-nitrosocysteine modification is found at cysteine 117. An N6-acetyllysine mark is found at lysine 139 and lysine 165. Disordered regions lie at residues leucine 323–arginine 342, leucine 375–aspartate 409, and alanine 466–valine 518. The segment covering leucine 375–glutamate 401 has biased composition (basic and acidic residues). Serine 407 carries the post-translational modification Phosphoserine. The segment covering alanine 476–glycine 487 has biased composition (acidic residues). Over residues alanine 492–valine 518 the composition is skewed to basic and acidic residues. Serine 527 carries the post-translational modification Phosphoserine. At threonine 558 the chain carries Phosphothreonine; by ROCK2 and STK10.

As to quaternary structure, in resting T-cells, part of a PAG1-NHERF1-MSN complex which is disrupted upon TCR activation. Interacts with NHERF1. Interacts with PPP1R16B. Interacts with SELPLG and SYK; these interactions mediate the activation of SYK by SELPLG. Interacts with PDPN (via cytoplasmic domain); this interaction activates RHOA and promotes epithelial-mesenchymal transition. Interacts with SPN/CD43 cytoplasmic tail. Interacts with CD44. Interacts with ICAM2. Interacts with ICAM3 (via C-terminus). Interacts with PDZD8. Interacts with F-actin. Interacts with CD46. Interacts with PTPN6. In terms of assembly, (Microbial infection) Interacts with HIV-1 envelope protein gp120. In terms of processing, phosphorylation on Thr-558 is crucial for the formation of microvilli-like structures. Phosphorylation by ROCK2 suppresses the head-to-tail association of the N-terminal and C-terminal halves resulting in an opened conformation which is capable of actin and membrane-binding. Phosphorylation on Thr-558 by STK10 negatively regulates lymphocyte migration and polarization. Post-translationally, S-nitrosylation of Cys-117 is induced by interferon-gamma and oxidatively-modified low-densitity lipoprotein (LDL(ox)) implicating the iNOS-S100A8/9 transnitrosylase complex. In all tissues and cultured cells studied.

Its subcellular location is the cell membrane. It localises to the cytoplasm. The protein localises to the cytoskeleton. The protein resides in the apical cell membrane. It is found in the cell projection. Its subcellular location is the microvillus membrane. It localises to the microvillus. A head-to-tail association, of the N-terminal and C-terminal halves results in a closed conformation (inactive form) which is incapable of actin or membrane-binding. Its function is as follows. Ezrin-radixin-moesin (ERM) family protein that connects the actin cytoskeleton to the plasma membrane and thereby regulates the structure and function of specific domains of the cell cortex. Tethers actin filaments by oscillating between a resting and an activated state providing transient interactions between moesin and the actin cytoskeleton. Once phosphorylated on its C-terminal threonine, moesin is activated leading to interaction with F-actin and cytoskeletal rearrangement. These rearrangements regulate many cellular processes, including cell shape determination, membrane transport, and signal transduction. The role of moesin is particularly important in immunity acting on both T and B-cells homeostasis and self-tolerance, regulating lymphocyte egress from lymphoid organs. Modulates phagolysosomal biogenesis in macrophages. Also participates in immunologic synapse formation. The sequence is that of Moesin from Homo sapiens (Human).